Here is a 171-residue protein sequence, read N- to C-terminus: Cation channel sperm-associated auxiliary subunit TMEM249 (171 aa).

Over 1–2 (ML) the chain is Cytoplasmic. Residues 3–17 (FIICLVFISCNVLRE) form a helical membrane-spanning segment. At 18–28 (VKYQETWCFPA) the chain is on the extracellular side. The chain crosses the membrane as a helical span at residues 29-40 (YGMVIGLWLMLS). The Cytoplasmic segment spans residues 41–171 (SIPQRRLVLN…TKSSVNDLDV (131 aa)).

As to quaternary structure, component of the CatSper complex or CatSpermasome composed of the core pore-forming members CATSPER1, CATSPER2, CATSPER3 and CATSPER4 as well as auxiliary members CATSPERB, CATSPERG2, CATSPERD, CATSPERE, CATSPERZ, C2CD6/CATSPERT, SLCO6C1, TMEM249, TMEM262 and EFCAB9. HSPA1 may be an additional auxiliary complex member. The core complex members CATSPER1, CATSPER2, CATSPER3 and CATSPER4 form a heterotetrameric channel. The auxiliary CATSPERB, CATSPERG2, CATSPERD and CATSPERE subunits form a pavilion-like structure over the pore which stabilizes the complex through interactions with CATSPER4, CATSPER3, CATSPER1 and CATSPER2 respectively. SLCO6C1 interacts with CATSPERE and TMEM262/CATSPERH interacts with CATSPERB, further stabilizing the complex. C2CD6/CATSPERT interacts at least with CATSPERD and is required for targeting the CatSper complex in the flagellar membrane.

The protein localises to the cell projection. It is found in the cilium. It localises to the flagellum membrane. Functionally, auxiliary component of the CatSper complex, a complex involved in sperm cell hyperactivation. The chain is Cation channel sperm-associated auxiliary subunit TMEM249 from Mus musculus (Mouse).